Reading from the N-terminus, the 261-residue chain is Leucyl/phenylalanyl-tRNA--protein transferase (261 aa).

The protein belongs to the L/F-transferase family.

Its subcellular location is the cytoplasm. It catalyses the reaction N-terminal L-lysyl-[protein] + L-leucyl-tRNA(Leu) = N-terminal L-leucyl-L-lysyl-[protein] + tRNA(Leu) + H(+). The enzyme catalyses N-terminal L-arginyl-[protein] + L-leucyl-tRNA(Leu) = N-terminal L-leucyl-L-arginyl-[protein] + tRNA(Leu) + H(+). It carries out the reaction L-phenylalanyl-tRNA(Phe) + an N-terminal L-alpha-aminoacyl-[protein] = an N-terminal L-phenylalanyl-L-alpha-aminoacyl-[protein] + tRNA(Phe). Functions in the N-end rule pathway of protein degradation where it conjugates Leu, Phe and, less efficiently, Met from aminoacyl-tRNAs to the N-termini of proteins containing an N-terminal arginine or lysine. This Yersinia pestis bv. Antiqua (strain Antiqua) protein is Leucyl/phenylalanyl-tRNA--protein transferase.